A 154-amino-acid polypeptide reads, in one-letter code: Calmodulin-like protein 4 (154 aa).

EF-hand domains follow at residues 7–42 (EQMV…LGLE), 43–78 (PTDQ…KMKD), 80–115 (DGDE…LGEK), and 116–151 (MTDE…AERK). 13 residues coordinate Ca(2+): Asp-20, Asn-22, Asp-24, Cys-26, Glu-31, Asp-56, Asp-58, Asn-60, Glu-67, Asp-93, Asp-95, Asn-97, and Glu-104. Lys-115 carries the N6,N6,N6-trimethyllysine modification. Residues Asp-129, Asp-131, Asp-133, Gln-135, and Glu-140 each coordinate Ca(2+).

This sequence belongs to the calmodulin family.

In terms of biological role, potential calcium sensor. This chain is Calmodulin-like protein 4 (CML4), found in Oryza sativa subsp. japonica (Rice).